The sequence spans 265 residues: Cytochrome c oxidase subunit 3 (265 aa).

Helical transmembrane passes span 41–61 (GGATLLSLGLIFILYTMFVWW), 85–105 (GFILFIVSEVMFFFAFFWAFF), 137–157 (TLILLSSGAAVTWAHHAILAG), 162–182 (AVYALVATVLLALVFTGFQGM), 200–220 (FFLATGFHGFHVIIGTLFLIV), and 245–265 (WHFVDVVWLFLFVSIYWWGGI).

This sequence belongs to the cytochrome c oxidase subunit 3 family. In terms of assembly, component of the cytochrome c oxidase (complex IV, CIV), a multisubunit enzyme composed of a catalytic core of 3 subunits and several supernumerary subunits. The complex exists as a monomer or a dimer and forms supercomplexes (SCs) in the inner mitochondrial membrane with ubiquinol-cytochrome c oxidoreductase (cytochrome b-c1 complex, complex III, CIII).

It localises to the mitochondrion inner membrane. It catalyses the reaction 4 Fe(II)-[cytochrome c] + O2 + 8 H(+)(in) = 4 Fe(III)-[cytochrome c] + 2 H2O + 4 H(+)(out). Its function is as follows. Component of the cytochrome c oxidase, the last enzyme in the mitochondrial electron transport chain which drives oxidative phosphorylation. The respiratory chain contains 3 multisubunit complexes succinate dehydrogenase (complex II, CII), ubiquinol-cytochrome c oxidoreductase (cytochrome b-c1 complex, complex III, CIII) and cytochrome c oxidase (complex IV, CIV), that cooperate to transfer electrons derived from NADH and succinate to molecular oxygen, creating an electrochemical gradient over the inner membrane that drives transmembrane transport and the ATP synthase. Cytochrome c oxidase is the component of the respiratory chain that catalyzes the reduction of oxygen to water. Electrons originating from reduced cytochrome c in the intermembrane space (IMS) are transferred via the dinuclear copper A center (CU(A)) of subunit 2 and heme A of subunit 1 to the active site in subunit 1, a binuclear center (BNC) formed by heme A3 and copper B (CU(B)). The BNC reduces molecular oxygen to 2 water molecules using 4 electrons from cytochrome c in the IMS and 4 protons from the mitochondrial matrix. The chain is Cytochrome c oxidase subunit 3 (COX3) from Triticum aestivum (Wheat).